The chain runs to 465 residues: Keratin, type I cytoskeletal 13 (465 aa).

The span at 1–28 shows a compositional bias: polar residues; it reads MNFTSFSITQGSRPQPPSTRGFSGNSFK. Residues 1–47 are disordered; sequence MNFTSFSITQGSRPQPPSTRGFSGNSFKSDLIPQSRRSHSVYGTPGS. The interval 1–98 is head; it reads MNFTSFSITQ…SGGSDLLLGT (98 aa). The segment at 99–135 is coil 1A; it reads SGKEAMQNLNDRLASYLEKVRSLEERNRELEQKIREW. Residues 100 to 412 form the IF rod domain; the sequence is GKEAMQNLND…ILLEGDEGKF (313 aa). A linker 1 region spans residues 136–154; it reads YEKQGAGTKTKDFSHYFKI. A coil 1B region spans residues 155-246; sequence IADLQKQIHD…KSHDEEMKAL (92 aa). The interval 247–269 is linker 12; the sequence is RSQLGGQVNVEVDAAPAEDLTKK. A coil 2 region spans residues 270-408; it reads LERMRQQYEQ…RTYRILLEGD (139 aa). The tail stretch occupies residues 409–465; it reads EGKFQTSPHHPSIVTKQTETVVTPVVITNVKTVVEEIIDGKIVSKKEYPGPPEKLMI.

It belongs to the intermediate filament family. Heterotetramer of two type I and two type II keratins. Expressed in skin.

Functionally, type 1 keratin. May maintain oral mucosal cell homeostasis and tissue organization in response to mechanical stress. This Protopterus aethiopicus (Marbled lungfish) protein is Keratin, type I cytoskeletal 13 (KRT13).